The primary structure comprises 755 residues: uncharacterized protein (755 aa).

7 disordered regions span residues 1–44 (MAAP…AAAQ), 72–91 (AEHS…ATAQ), 99–174 (FSLS…IPHY), 393–467 (TTNV…SSSR), 523–545 (LPKT…EGGG), 584–672 (VSSS…LPSG), and 734–755 (QAAT…PRRK). Composition is skewed to low complexity over residues 10–25 (TTTQ…TTTT) and 35–44 (TTTGSGAAAQ). 3 stretches are compositionally biased toward low complexity: residues 112 to 130 (ISSS…NASS), 139 to 151 (SPDL…LSGS), and 393 to 412 (TTNV…TKST). The segment covering 429–446 (IEEDTIQFDDPGQGEDDN) has biased composition (acidic residues). Residues 452–462 (NTPPPPGPPPN) show a composition bias toward pro residues. Residues 536-545 (ATGGVTEGGG) are compositionally biased toward gly residues. Over residues 590 to 599 (LPQPQVATTI) the composition is skewed to polar residues. Composition is skewed to low complexity over residues 600 to 666 (TPQA…QTPQ) and 740 to 755 (SQPS…PRRK).

The protein belongs to the chlamydial CPn_0572/CT_456/TC_0741 family.

This is an uncharacterized protein from Chlamydia pneumoniae (Chlamydophila pneumoniae).